We begin with the raw amino-acid sequence, 542 residues long: 2,3-bisphosphoglycerate-independent phosphoglycerate mutase (542 aa).

Residues Asp13 and Ser63 each coordinate Mn(2+). Ser63 functions as the Phosphoserine intermediate in the catalytic mechanism. Substrate-binding positions include His124, 154–155, Arg186, Arg192, 263–266, and Lys357; these read RD and RADR. Mn(2+) contacts are provided by Asp424, His428, Asp465, His466, and His484.

The protein belongs to the BPG-independent phosphoglycerate mutase family. Monomer. Mn(2+) is required as a cofactor.

The enzyme catalyses (2R)-2-phosphoglycerate = (2R)-3-phosphoglycerate. Its pathway is carbohydrate degradation; glycolysis; pyruvate from D-glyceraldehyde 3-phosphate: step 3/5. Functionally, catalyzes the interconversion of 2-phosphoglycerate and 3-phosphoglycerate. This is 2,3-bisphosphoglycerate-independent phosphoglycerate mutase from Herpetosiphon aurantiacus (strain ATCC 23779 / DSM 785 / 114-95).